The sequence spans 346 residues: Histidinol-phosphate aminotransferase (346 aa).

Position 209 is an N6-(pyridoxal phosphate)lysine (Lys209).

This sequence belongs to the class-II pyridoxal-phosphate-dependent aminotransferase family. Histidinol-phosphate aminotransferase subfamily. As to quaternary structure, homodimer. Requires pyridoxal 5'-phosphate as cofactor.

It carries out the reaction L-histidinol phosphate + 2-oxoglutarate = 3-(imidazol-4-yl)-2-oxopropyl phosphate + L-glutamate. It functions in the pathway amino-acid biosynthesis; L-histidine biosynthesis; L-histidine from 5-phospho-alpha-D-ribose 1-diphosphate: step 7/9. The protein is Histidinol-phosphate aminotransferase of Vibrio cholerae serotype O1 (strain ATCC 39541 / Classical Ogawa 395 / O395).